We begin with the raw amino-acid sequence, 1052 residues long: MKLVNIWLLLLVVLLCGKKHLGDRLGKKAFEKAPCPSCSHLTLKVEFSSTVVEYEYIVAFNGYFTAKARNSFISSALKSSEVDNWRIIPRNNPSSDYPSDFEVIQIKEKQKAGLLTLEDHPNIKRVTPQRKVFRSLKFAESDPIVPCNETRWSQKWQSSRPLKRASLSLGSGFWHATGRHSSRRLLRAIPRQVAQTLQADVLWQMGYTGANVRVAVFDTGLSEKHPHFKNVKERTNWTNERTLDDGLGHGTFVAGVIASMRECQGFAPDAELHIFRVFTNNQVSYTSWFLDAFNYAILKKIDVLNLSIGGPDFMDHPFVDKVWELTANNVIMVSAIGNDGPLYGTLNNPADQMDVIGVGGIDFEDNIARFSSRGMTTWELPGGYGRVKPDIVTYGAGVRGSGVKGGCRALSGTSVASPVVAGAVTLLVSTVQKRELVNPASVKQALIASARRLPGVNMFEQGHGKLDLLRAYQILSSYKPQASLSPSYIDLTECPYMWPYCSQPIYYGGMPTIVNVTILNGMGVTGRIVDKPEWRPYLPQNGDNIEVAFSYSSVLWPWSGYLAISISVTKKAASWEGIAQGHIMITVASPAETELKNGAEHTSTVKLPIKVKIIPTPPRSKRVLWDQYHNLRYPPGYFPRDNLRMKNDPLDWNGDHVHTNFRDMYQHLRSMGYFVEVLGAPFTCFDATQYGTLLMVDSEEEYFPEEIAKLRRDVDNGLSLVVFSDWYNTSVMRKVKFYDENTRQWWMPDTGGANVPALNELLSVWNMGFSDGLYEGEFALANHDMYYASGCSIARFPEDGVVITQTFKDQGLEVLKQETAVVDNVPILGLYQIPAEGGGRIVLYGDSNCLDDSHRQKDCFWLLDALLQYTSYGVTPPSLSHSGNRQRPPSGAGLAPPERMEGNHLHRYSKVLEAHLGDPKPRPLPACPHLSWAKPQPLNETAPSNLWKHQKLLSIDLDKVVLPNFRSNRPQVRPLSPGESGAWDIPGGIMPGRYNQEVGQTIPVFAFLGAMVALAFFVVQISKAKSRPKRRRPRAKRPQLAQQAHPARTPSV.

The signal sequence occupies residues M1–G17. The propeptide occupies K18 to L186. N148 carries N-linked (GlcNAc...) asparagine glycosylation. S168 carries the phosphoserine modification. Residues R187–G999 are Lumenal-facing. The Peptidase S8 domain occupies P190–Y472. D218 serves as the catalytic Charge relay system. An N-linked (GlcNAc...) asparagine glycan is attached at N236. H249 acts as the Charge relay system in catalysis. The N-linked (GlcNAc...) asparagine glycan is linked to N305. Residue S414 is the Charge relay system of the active site. N515 and N728 each carry an N-linked (GlcNAc...) asparagine glycan. Positions P877–R887 are enriched in polar residues. The tract at residues P877–M900 is disordered. N939 is a glycosylation site (N-linked (GlcNAc...) asparagine). The helical transmembrane segment at Q1000 to S1022 threads the bilayer. The Cytoplasmic segment spans residues K1023–V1052. Basic residues predominate over residues S1026–R1037. A disordered region spans residues S1026–V1052.

It belongs to the peptidase S8 family. As to quaternary structure, interacts with LYSET; this interaction bridges GNPTAB to MBTPS1. The cofactor is Ca(2+). Post-translationally, the 148 kDa zymogen is processed progressively into two membrane-bound 120 and 106 kDa forms in the endoplasmic reticulum, and late into a secreted 98 kDa form. The propeptide is autocatalytically removed through an intramolecular cleavage after Leu-186. Further cleavage generates 14, 10, and 8 kDa intermediates. Widely expressed. In adult rat, highly expressed in anterior pituitary, thyroid and adrenal glands and in liver. In 2-day old rat, detected in developing skin, striated muscles, cardiac muscles, bones, teeth and internal organs. Highly expressed in retina, cerebellum, pituitary, submaxillary, thyroid and adrenal glands, molars, thymus, kidney and intestine.

The protein resides in the endoplasmic reticulum membrane. Its subcellular location is the golgi apparatus membrane. It carries out the reaction Processes precursors containing basic and hydrophobic/aliphatic residues at P4 and P2, respectively, with a relatively relaxed acceptance of amino acids at P1 and P3.. Inhibited by divalent copper and zinc ions, but not by nickel or cobalt. Inhibited by its prosegment, but not smaller fragments. Inhibited by 4-(2-aminoethyl)benzenesulfonyl fluoride (AEBSF), a serine protease inhibitor. Its function is as follows. Serine protease that cleaves after hydrophobic or small residues, provided that Arg or Lys is in position P4: known substrates include SREBF1/SREBP1, SREBF2/SREBP2, BDNF, GNPTAB, ATF6, ATF6B and FAM20C. Cleaves substrates after Arg-Ser-Val-Leu (SREBP2), Arg-His-Leu-Leu (ATF6), Arg-Gly-Leu-Thr (BDNF) and its own propeptide after Arg-Arg-Leu-Leu. Catalyzes the first step in the proteolytic activation of the sterol regulatory element-binding proteins (SREBPs) SREBF1/SREBP1 and SREBF2/SREBP2. Also mediates the first step in the proteolytic activation of the cyclic AMP-dependent transcription factor ATF-6 (ATF6 and ATF6B). Mediates the protein cleavage of GNPTAB into subunit alpha and beta, thereby participating in biogenesis of lysosomes. Cleaves the propeptide from FAM20C which is required for FAM20C secretion from the Golgi apparatus membrane and for enhancement of FAM20C kinase activity, promoting osteoblast differentiation and biomineralization. Involved in the regulation of M6P-dependent Golgi-to-lysosome trafficking of lysosomal enzymes. It is required for the activation of CREB3L2/BBF2H7, a transcriptional activator of MIA3/TANGO and other genes controlling mega vesicle formation. Therefore, it plays a key role in the regulation of mega vesicle-mediated collagen trafficking. In astrocytes and osteoblasts, upon DNA damage and ER stress, mediates the first step of the regulated intramembrane proteolytic activation of the transcription factor CREB3L1, leading to the inhibition of cell-cycle progression. This is Membrane-bound transcription factor site-1 protease (Mbtps1) from Rattus norvegicus (Rat).